Here is a 979-residue protein sequence, read N- to C-terminus: Putative transcription initiation factor TFIID 111 kDa subunit (979 aa).

A Phosphoserine modification is found at Ser-244.

As to quaternary structure, TFIID is composed of TATA binding protein (TBP) and a number of TBP-associated factors (TAFs).

It localises to the nucleus. Its function is as follows. TAFs are components of the transcription factor IID (TFIID) complex that are essential for mediating regulation of RNA polymerase transcription. This is Putative transcription initiation factor TFIID 111 kDa subunit from Schizosaccharomyces pombe (strain 972 / ATCC 24843) (Fission yeast).